The sequence spans 1603 residues: Protein TIC 214 (1603 aa).

Helical transmembrane passes span 11-31 (VLWA…LFGL), 58-78 (LSGT…FLSI), 86-106 (LLLK…FYWY), 131-151 (IFFD…SPIL), 167-187 (LFVL…FNCI), and 213-233 (FSIF…VPFF).

Belongs to the TIC214 family. Part of the Tic complex.

It localises to the plastid. The protein resides in the chloroplast inner membrane. Functionally, involved in protein precursor import into chloroplasts. May be part of an intermediate translocation complex acting as a protein-conducting channel at the inner envelope. This chain is Protein TIC 214, found in Physcomitrium patens (Spreading-leaved earth moss).